A 337-amino-acid polypeptide reads, in one-letter code: GTP 3',8-cyclase (337 aa).

The region spanning 17 to 243 is the Radical SAM core domain; the sequence is PFQRQYYYLR…HKSHTDGPAK (227 aa). Arginine 26 lines the GTP pocket. Positions 33 and 37 each coordinate [4Fe-4S] cluster. Position 39 (tyrosine 39) interacts with S-adenosyl-L-methionine. Cysteine 40 is a binding site for [4Fe-4S] cluster. GTP is bound at residue arginine 76. Glycine 80 lines the S-adenosyl-L-methionine pocket. A GTP-binding site is contributed by threonine 107. An S-adenosyl-L-methionine-binding site is contributed by serine 131. Lysine 168 contacts GTP. Residue methionine 202 coordinates S-adenosyl-L-methionine. Residues cysteine 265 and cysteine 268 each coordinate [4Fe-4S] cluster. A GTP-binding site is contributed by 270–272; that stretch reads RLR. Cysteine 282 lines the [4Fe-4S] cluster pocket.

The protein belongs to the radical SAM superfamily. MoaA family. Monomer and homodimer. [4Fe-4S] cluster serves as cofactor.

It catalyses the reaction GTP + AH2 + S-adenosyl-L-methionine = (8S)-3',8-cyclo-7,8-dihydroguanosine 5'-triphosphate + 5'-deoxyadenosine + L-methionine + A + H(+). It functions in the pathway cofactor biosynthesis; molybdopterin biosynthesis. Catalyzes the cyclization of GTP to (8S)-3',8-cyclo-7,8-dihydroguanosine 5'-triphosphate. The sequence is that of GTP 3',8-cyclase from Haemophilus influenzae (strain PittEE).